The chain runs to 339 residues: uncharacterized protein (339 aa).

The tract at residues 1-24 is disordered; the sequence is IQPARRHTKNTNMAKHTTKGTGHS. Over residues 10 to 21 the composition is skewed to polar residues; the sequence is NTNMAKHTTKGT.

It localises to the mitochondrion. This is an uncharacterized protein from Zea mays (Maize).